The following is a 169-amino-acid chain: Putative phosphoesterase BLi01284/BL02661 (169 aa).

The active-site Proton donor is the His34. 2 consecutive short sequence motifs (HXTX) follow at residues 34–37 (HLTL) and 115–118 (HVTV). His115 (proton acceptor) is an active-site residue.

This sequence belongs to the 2H phosphoesterase superfamily. YjcG family.

In Bacillus licheniformis (strain ATCC 14580 / DSM 13 / JCM 2505 / CCUG 7422 / NBRC 12200 / NCIMB 9375 / NCTC 10341 / NRRL NRS-1264 / Gibson 46), this protein is Putative phosphoesterase BLi01284/BL02661.